A 31-amino-acid polypeptide reads, in one-letter code: Cytochrome b6-f complex subunit 6 (31 aa).

A helical membrane pass occupies residues 3 to 23 (ILISYFCFLLVFFLFTLILFI).

Belongs to the PetL family. As to quaternary structure, the 4 large subunits of the cytochrome b6-f complex are cytochrome b6, subunit IV (17 kDa polypeptide, PetD), cytochrome f and the Rieske protein, while the 4 small subunits are PetG, PetL, PetM and PetN. The complex functions as a dimer.

The protein localises to the plastid. It is found in the chloroplast thylakoid membrane. Functionally, component of the cytochrome b6-f complex, which mediates electron transfer between photosystem II (PSII) and photosystem I (PSI), cyclic electron flow around PSI, and state transitions. PetL is important for photoautotrophic growth as well as for electron transfer efficiency and stability of the cytochrome b6-f complex. This Welwitschia mirabilis (Tree tumbo) protein is Cytochrome b6-f complex subunit 6.